The chain runs to 738 residues: Polyribonucleotide nucleotidyltransferase (738 aa).

The Mg(2+) site is built by D487 and D493. Positions 554-613 (PKIVTMTINPDKIRDVIGPGGKMINSIIDQTGVKIDIEQDGTVFIASTDQEGIDLAMSMI) constitute a KH domain. Residues 623–691 (GEVYDATVRR…DKGRVNASRK (69 aa)) enclose the S1 motif domain. The tract at residues 704 to 738 (EAYEAKRKAARESRPPRDSRPPRRDGDRRPPRSTN) is disordered.

The protein belongs to the polyribonucleotide nucleotidyltransferase family. Mg(2+) is required as a cofactor.

The protein resides in the cytoplasm. It catalyses the reaction RNA(n+1) + phosphate = RNA(n) + a ribonucleoside 5'-diphosphate. Involved in mRNA degradation. Catalyzes the phosphorolysis of single-stranded polyribonucleotides processively in the 3'- to 5'-direction. This is Polyribonucleotide nucleotidyltransferase from Exiguobacterium sp. (strain ATCC BAA-1283 / AT1b).